The following is a 308-amino-acid chain: 3'(2'),5'-bisphosphate nucleotidase 1 (308 aa).

The residue at position 2 (alanine 2) is an N-acetylalanine. The Proton acceptor role is filled by aspartate 51. Glutamate 74, aspartate 117, leucine 119, and aspartate 120 together coordinate Mg(2+). Threonine 122 acts as the Proton acceptor in catalysis. The residue at position 122 (threonine 122) is a Phosphothreonine. AMP is bound by residues threonine 195, histidine 198, glycine 220, and lysine 224. Position 240 is a phosphoserine (serine 240). Lysine 244 bears the N6-succinyllysine mark. A Mg(2+)-binding site is contributed by aspartate 247.

The protein belongs to the inositol monophosphatase superfamily. Requires Mg(2+) as cofactor. As to expression, highly expressed in kidney, liver, pancreas and heart. Detected at lower levels in brain, placenta, lung and skeletal muscle.

It carries out the reaction adenosine 3',5'-bisphosphate + H2O = AMP + phosphate. The catalysed reaction is adenosine 2',5'-bisphosphate + H2O = AMP + phosphate. The enzyme catalyses 3'-phosphoadenylyl sulfate + H2O = adenosine 5'-phosphosulfate + phosphate. It catalyses the reaction 1D-myo-inositol 1,4-bisphosphate + H2O = 1D-myo-inositol 4-phosphate + phosphate. It carries out the reaction 1D-myo-inositol 1,3,4-trisphosphate + H2O = 1D-myo-inositol 3,4-bisphosphate + phosphate. With respect to regulation, is very sensitive to inhibition by Li(+) (IC(50)=0.3 mM for hydrolysis of PAP; IC(50)=0.6 mM for hydrolysis of inositol-1,4-bis-phosphate). Is not affected by high Na(+) concentrations. Its function is as follows. Phosphatase that converts 3'(2')-phosphoadenosine 5'-phosphate (PAP) to AMP and inositol 1,4-bisphosphate (Ins(1,4)P2) to inositol 4-phosphate. Is also able to hydrolyze adenosine 3'-phosphate 5'-phosphosulfate (PAPS) to adenosine 5'-phosphosulfate (APS). Probably prevents the toxic accumulation of PAP, a compound which inhibits a variety of proteins, including PAPS-utilizing enzymes such as sulfotransferases, and RNA processing enzymes. Could also play a role in inositol recycling and phosphoinositide metabolism. Is not active on 3'-AMP, inositol-1-phosphate and inositol-1,4,5-triphosphate. The chain is 3'(2'),5'-bisphosphate nucleotidase 1 (BPNT1) from Homo sapiens (Human).